A 341-amino-acid chain; its full sequence is Sphingolipid long chain base-responsive protein LSP1 (341 aa).

The segment covering Met-1 to Arg-11 has biased composition (polar residues). The disordered stretch occupies residues Met-1 to Phe-32. At Thr-233 the chain carries Phosphothreonine. Composition is skewed to acidic residues over residues Tyr-282–Glu-294 and Val-305–His-323. The interval Tyr-282–Ile-341 is disordered. The span at Ser-330–Ile-341 shows a compositional bias: polar residues.

Phosphorylated by PKH1 and PKH2. Phosphorylation is stimulated by sphingolipid long chain bases (LCBs). Post-translationally, N-glycosylated.

The protein resides in the cytoplasm. Its subcellular location is the cell cortex. Together with PIL1, main component of eisosomes, structures at the cell periphery underneath the plasma membrane that mark the site of endocytosis. Negative regulator of cell wall integrity (CWI) in unstressed cells, probably by inhibiting protein kinase PKH1/PHK2 activity and regulating their downstream CWI pathways PKC1-MAP kinase pathway and protein kinase YPK1 pathway. Activity may be regulated by the transient increase of sphingolipid long chain bases (LCBs) during heat stress. The protein is Sphingolipid long chain base-responsive protein LSP1 (LSP1) of Saccharomyces cerevisiae (strain ATCC 204508 / S288c) (Baker's yeast).